The chain runs to 591 residues: V-type ATP synthase alpha chain (591 aa).

233 to 240 (GPFGAGKT) contributes to the ATP binding site.

The protein belongs to the ATPase alpha/beta chains family.

The catalysed reaction is ATP + H2O + 4 H(+)(in) = ADP + phosphate + 5 H(+)(out). In terms of biological role, produces ATP from ADP in the presence of a proton gradient across the membrane. The V-type alpha chain is a catalytic subunit. The polypeptide is V-type ATP synthase alpha chain (Streptococcus pyogenes serotype M12 (strain MGAS2096)).